Here is a 769-residue protein sequence, read N- to C-terminus: Probable protease Ga0334635_1659 (769 aa).

A disordered region spans residues 118 to 167; it reads VARGSSDNNGAPPLSFTLSHGDPKSDPEPSSPSRLVNTGLSEAERPESPL.

Its function is as follows. Probably a dedicated protease for substrate gasdermin bGSDM; cleaves the bGSDM precursor, releasing the pore-forming moiety, which integrates into the membrane and triggers cell death. Involved in defense against bacteriophages. Expression of gasdermin bGSDM and this neighboring protease is toxic in E.coli. In Vitiosangium sp. (strain GDMCC 1.1324), this protein is Probable protease Ga0334635_1659.